Here is a 109-residue protein sequence, read N- to C-terminus: EHRHMTAHIIARNTNVAYAQRQTQLFAPPPHTRDFHTEVPLYALHGFRSDNNTAYLHMFHPHTSPPFMRYIHPKMKNQDTHNMILHIFFIETYRSGAGTFLVTHRHLRQ.

This is an uncharacterized protein from Homo sapiens (Human).